A 1045-amino-acid polypeptide reads, in one-letter code: Elongation factor 3 (1045 aa).

Residues Ile42, His44, and Ser83 each contribute to the ADP site. HEAT repeat units follow at residues 86–123 (PYVV…AVNP), 125–162 (AVKA…QAKS), 166–203 (LRMT…TVEN), 171–209 (LIPV…IERF), 205–241 (DIER…EVTP), 242–279 (ATLS…LVED), and 285–323 (PFLN…VGAV). Thr392 and His396 together coordinate ADP. 2 ABC transporter domains span residues 426–641 (EEGE…YYEL) and 667–993 (VKVS…KKED). Residues Asn703, Glu922, Asn925, and His951 each contribute to the ADP site. Residues 975–1045 (GHNWVSGQGS…AYVSDDDADF (71 aa)) form a disordered region. Residues 1020-1031 (RKKKKERMKKKK) are compositionally biased toward basic residues.

The protein belongs to the ABC transporter superfamily. ABCF family. EF3 subfamily.

It localises to the cytoplasm. The protein resides in the cytosol. It catalyses the reaction ATP + H2O = ADP + phosphate + H(+). It participates in protein biosynthesis; polypeptide chain elongation. Its function is as follows. Ribosome-dependent ATPase that functions in cytoplasmic translation elongation. Required for the ATP-dependent release of deacylated tRNA from the ribosomal E-site during protein biosynthesis. Stimulates the eEF1A-dependent binding of aminoacyl-tRNA to the ribosomal A-site, which has reduced affinity for tRNA as long as the E-site is occupied. Assists translation termination by stimulating the release of nascent protein from the ribosome by release factors. This is Elongation factor 3 from Zygosaccharomyces rouxii (strain ATCC 2623 / CBS 732 / NBRC 1130 / NCYC 568 / NRRL Y-229).